A 605-amino-acid polypeptide reads, in one-letter code: Ubiquitin carboxyl-terminal hydrolase 2 (605 aa).

The necessary for interaction with MDM4 stretch occupies residues Met1–Glu200. Disordered regions lie at residues Leu71–Leu107 and Trp237–Gln264. The segment covering Lys90–Glu100 has biased composition (basic and acidic residues). Residues Pro245–Arg255 show a composition bias toward low complexity. Residues Ala267–Ala599 form the USP domain. The Nucleophile role is filled by Cys276. Residues Tyr403–Lys503 are necessary for interaction with MDM4. Positions 425, 428, 476, and 479 each coordinate Zn(2+). The active-site Proton acceptor is His557.

Belongs to the peptidase C19 family. USP2 subfamily. Homooligomer. Found in trimeric complex with MDM2 and MDM4 and USP2. Interacts with CCND1; the interaction is direct and promotes its stabilization by antagonizing ubiquitin-dependent degradation. Interacts (via N-terminus and C-terminus) with MDM2. Interacts with MDM4. Interacts with PER1. Interacts with KCNQ1; counteracts the NEDD4L-specific down-regulation of I(Ks) and restore plasma membrane localization of KCNQ1. Isoform 4: Interacts with NHERF4 and CLTC. Expressed in mesangial cells of the kidney and in different types of glomerulonephritides (at protein level).

It is found in the cytoplasm. It localises to the perinuclear region. The protein localises to the nucleus. The protein resides in the membrane. The enzyme catalyses Thiol-dependent hydrolysis of ester, thioester, amide, peptide and isopeptide bonds formed by the C-terminal Gly of ubiquitin (a 76-residue protein attached to proteins as an intracellular targeting signal).. With respect to regulation, cleavage is inhibited by ubiquitin in a dosage-dependent manner. Cleavage is blocked by ubiquitin aldehyde. Functionally, hydrolase that deubiquitinates polyubiquitinated target proteins such as MDM2, MDM4 and CCND1. Isoform 1 and isoform 4 possess both ubiquitin-specific peptidase and isopeptidase activities. Deubiquitinates MDM2 without reversing MDM2-mediated p53/TP53 ubiquitination and thus indirectly promotes p53/TP53 degradation and limits p53 activity. Has no deubiquitinase activity against p53/TP53. Prevents MDM2-mediated degradation of MDM4. Plays a role in the G1/S cell-cycle progression in normal and cancer cells. Regulates the circadian clock by modulating its intrinsic circadian rhythm and its capacity to respond to external cues. Associates with clock proteins and deubiquitinates core clock component PER1 but does not affect its overall stability. Regulates the nucleocytoplasmic shuttling and nuclear retention of PER1 and its repressive role on the clock transcription factors CLOCK and BMAL1. Plays a role in the regulation of myogenic differentiation of embryonic muscle cells. In terms of biological role, circadian clock output effector that regulates Ca(2+) absorption in the small intestine. Probably functions by regulating protein levels of the membrane scaffold protein NHERF4 in a rhythmic manner, and is therefore likely to control Ca(2+) membrane permeability mediated by the Ca(2+) channel TRPV6 in the intestine. This chain is Ubiquitin carboxyl-terminal hydrolase 2 (USP2), found in Homo sapiens (Human).